Reading from the N-terminus, the 894-residue chain is Myb-like protein K (894 aa).

Positions 93 to 139 (LQQQQQSPVTNVATNTPPTLQHSISSPSPNNFNNNNNANNQFLSPNS) are enriched in low complexity. Disordered stretches follow at residues 93–221 (LQQQ…SASS), 299–353 (QVGN…QPIT), 492–539 (QQQQ…LEMI), and 601–659 (AATT…HWTS). A compositionally biased stretch (polar residues) spans 140–149 (PQVAKSSPSQ). The span at 150–221 (NNPSTPIANT…SQSLNSSASS (72 aa)) shows a compositional bias: low complexity. Residues 300–309 (VGNPMQQSND) show a composition bias toward polar residues. Low complexity-rich tracts occupy residues 310–353 (MQPQ…QPIT) and 492–527 (QQQQQHQMHQQHQMQPQQQQQQHQMHQQSPQQPQQM). Basic and acidic residues-rich tracts occupy residues 611–640 (GKEEKEKKKDKKDKDKDKDKDDDDKESKKD) and 649–659 (ASKEKTSHWTS). One can recognise an HTH myb-type domain in the interval 649 to 704 (ASKEKTSHWTSEEHNKFLEAVQQFGIKDYHAIAKFVQTRNHHQVRTHVNTYLKNQK). The H-T-H motif DNA-binding region spans 677-700 (YHAIAKFVQTRNHHQVRTHVNTYL). Residues 703-852 (QKKAEAATSS…EYNSGFDSNS (150 aa)) form a disordered region. 3 stretches are compositionally biased toward low complexity: residues 710-742 (TSSTQVSTPQQQLPIVGTPQQSVGTPQQQQPPI), 751-805 (QQQQ…QQPQ), and 815-845 (PPNNENNNNINNNLENTNNNDNGNNNNNEYN).

It is found in the nucleus. This Dictyostelium discoideum (Social amoeba) protein is Myb-like protein K (mybK).